Consider the following 338-residue polypeptide: MO25-like protein 2 (338 aa).

It belongs to the Mo25 family.

It is found in the cytoplasm. Its subcellular location is the cytoskeleton. It localises to the spindle pole. Functionally, regulates asymmetric cell division in Q.p neuroblast lineage. Plays a role in cell shedding during embryogenesis. In Caenorhabditis elegans, this protein is MO25-like protein 2 (mop-25.2).